The chain runs to 156 residues: Small ribosomal subunit protein uS7 (156 aa).

The protein belongs to the universal ribosomal protein uS7 family. Part of the 30S ribosomal subunit. Contacts proteins S9 and S11.

In terms of biological role, one of the primary rRNA binding proteins, it binds directly to 16S rRNA where it nucleates assembly of the head domain of the 30S subunit. Is located at the subunit interface close to the decoding center, probably blocks exit of the E-site tRNA. This is Small ribosomal subunit protein uS7 from Pseudomonas syringae pv. syringae (strain B728a).